The primary structure comprises 1068 residues: Phosphatidylinositol 4,5-bisphosphate 3-kinase catalytic subunit alpha isoform (1068 aa).

The region spanning 16 to 105 is the PI3K-ABD domain; the sequence is MPPRILVECL…QPFLKVIEPV (90 aa). The PI3K-RBD domain occupies 187 to 289; the sequence is KGQIIVVIWV…GRMPNLMLMA (103 aa). A C2 PI3K-type domain is found at 330–487; sequence INSALRIKIL…DWFSSVVKFP (158 aa). Residues 517-694 form the PIK helical domain; it reads LARDNELREN…GLLLESYCRA (178 aa). Residues 765 to 1051 form the PI3K/PI4K catalytic domain; the sequence is RLEECRIMSS…QMNDAHHGGW (287 aa). Residues 771–777 are G-loop; the sequence is IMSSAKR. Residues 912–920 form a catalytic loop region; the sequence is GIGDRHNSN. Residues 931–957 form an activation loop region; it reads HIDFGHFLDHKKKKFGYKRERVPFVLT.

This sequence belongs to the PI3/PI4-kinase family. As to quaternary structure, heterodimer of a catalytic subunit PIK3CA and a p85 regulatory subunit (PIK3R1, PIK3R2 or PIK3R3). Interacts with IRS1 in nuclear extracts. Interacts with RUFY3. Interacts with RASD2. Interacts with APPL1. Interacts with HRAS and KRAS. Interaction with HRAS/KRAS is required for PI3K pathway signaling and cell proliferation stimulated by EGF and FGF2. Interacts with FAM83B; activates the PI3K/AKT signaling cascade.

It carries out the reaction L-seryl-[protein] + ATP = O-phospho-L-seryl-[protein] + ADP + H(+). The enzyme catalyses a 1,2-diacyl-sn-glycero-3-phospho-(1D-myo-inositol) + ATP = a 1,2-diacyl-sn-glycero-3-phospho-(1D-myo-inositol-3-phosphate) + ADP + H(+). The catalysed reaction is a 1,2-diacyl-sn-glycero-3-phospho-(1D-myo-inositol-4,5-bisphosphate) + ATP = a 1,2-diacyl-sn-glycero-3-phospho-(1D-myo-inositol-3,4,5-trisphosphate) + ADP + H(+). It catalyses the reaction 1,2-dioctanoyl-sn-glycero-3-phospho-(1D-myo-inositol-4,5-bisphosphate) + ATP = 1,2-dioctanoyl-sn-glycero-3-phospho-(1D-myo-inositol-3,4,5-trisphosphate) + ADP + H(+). It carries out the reaction 1-octadecanoyl-2-(5Z,8Z,11Z,14Z)-eicosatetraenoyl-sn-glycero-3-phospho-1D-myo-inositol 4,5-bisphosphate + ATP = 1-octadecanoyl-2-(5Z,8Z,11Z,14Z-eicosatetraenoyl)-sn-glycero-3-phospho-(1D-myo-inositol 3,4,5-triphosphate) + ADP + H(+). It functions in the pathway phospholipid metabolism; phosphatidylinositol phosphate biosynthesis. Phosphoinositide-3-kinase (PI3K) phosphorylates phosphatidylinositol (PI) and its phosphorylated derivatives at position 3 of the inositol ring to produce 3-phosphoinositides. Uses ATP and PtdIns(4,5)P2 (phosphatidylinositol 4,5-bisphosphate) to generate phosphatidylinositol 3,4,5-trisphosphate (PIP3). PIP3 plays a key role by recruiting PH domain-containing proteins to the membrane, including AKT1 and PDPK1, activating signaling cascades involved in cell growth, survival, proliferation, motility and morphology. Participates in cellular signaling in response to various growth factors. Involved in the activation of AKT1 upon stimulation by receptor tyrosine kinases ligands such as EGF, insulin, IGF1, VEGFA and PDGF. Involved in signaling via insulin-receptor substrate (IRS) proteins. Essential in endothelial cell migration during vascular development through VEGFA signaling, possibly by regulating RhoA activity. Required for lymphatic vasculature development, possibly by binding to RAS and by activation by EGF and FGF2, but not by PDGF. Regulates invadopodia formation through the PDPK1-AKT1 pathway. Participates in cardiomyogenesis in embryonic stem cells through a AKT1 pathway. Participates in vasculogenesis in embryonic stem cells through PDK1 and protein kinase C pathway. In addition to its lipid kinase activity, it displays a serine-protein kinase activity that results in the autophosphorylation of the p85alpha regulatory subunit as well as phosphorylation of other proteins such as 4EBP1, H-Ras, the IL-3 beta c receptor and possibly others. Plays a role in the positive regulation of phagocytosis and pinocytosis. In Bos taurus (Bovine), this protein is Phosphatidylinositol 4,5-bisphosphate 3-kinase catalytic subunit alpha isoform (PIK3CA).